Consider the following 508-residue polypeptide: Steroid 17-alpha-hydroxylase/17,20 lyase (508 aa).

Cysteine 442 contacts heme.

Belongs to the cytochrome P450 family. Heme serves as cofactor.

It localises to the endoplasmic reticulum membrane. It is found in the microsome membrane. It catalyses the reaction a C21-steroid + reduced [NADPH--hemoprotein reductase] + O2 = a 17alpha-hydroxy-C21-steroid + oxidized [NADPH--hemoprotein reductase] + H2O + H(+). The catalysed reaction is progesterone + reduced [NADPH--hemoprotein reductase] + O2 = 17alpha-hydroxyprogesterone + oxidized [NADPH--hemoprotein reductase] + H2O + H(+). The enzyme catalyses pregnenolone + reduced [NADPH--hemoprotein reductase] + O2 = 17alpha-hydroxypregnenolone + oxidized [NADPH--hemoprotein reductase] + H2O + H(+). It carries out the reaction 17alpha-hydroxyprogesterone + reduced [NADPH--hemoprotein reductase] + O2 = androst-4-ene-3,17-dione + acetate + oxidized [NADPH--hemoprotein reductase] + H2O + 2 H(+). It catalyses the reaction 17alpha-hydroxyprogesterone + reduced [NADPH--hemoprotein reductase] + O2 = 16alpha,17alpha-dihydroxyprogesterone + oxidized [NADPH--hemoprotein reductase] + H2O + H(+). The catalysed reaction is 16alpha,17alpha-dihydroxyprogesterone + reduced [NADPH--hemoprotein reductase] + O2 = 6beta,16alpha,17alpha-trihydroxyprogesterone + oxidized [NADPH--hemoprotein reductase] + H2O + H(+). The enzyme catalyses 17alpha-hydroxypregnenolone + reduced [NADPH--hemoprotein reductase] + O2 = 3beta-hydroxyandrost-5-en-17-one + acetate + oxidized [NADPH--hemoprotein reductase] + H2O + 2 H(+). It carries out the reaction 16alpha,17alpha-dihydroxypregnenolone + reduced [NADPH--hemoprotein reductase] + O2 = 3beta,16alpha-dihydroxy-androst-5-en-17-one + acetate + oxidized [NADPH--hemoprotein reductase] + H2O + 2 H(+). It catalyses the reaction 3beta-hydroxyandrost-5-en-17-one + reduced [NADPH--hemoprotein reductase] + O2 = 3beta,16alpha-dihydroxy-androst-5-en-17-one + oxidized [NADPH--hemoprotein reductase] + H2O + H(+). The catalysed reaction is androst-4-ene-3,17-dione + reduced [NADPH--hemoprotein reductase] + O2 = 16alpha-hydroxyandrost-4-ene-3,17-dione + oxidized [NADPH--hemoprotein reductase] + H2O + H(+). The protein operates within steroid hormone biosynthesis. It functions in the pathway steroid biosynthesis; glucocorticoid biosynthesis. Its activity is regulated as follows. Regulated predominantly by intracellular cAMP levels. The 17,20-lyase activity is stimulated by cytochrome b5, which acts as an allosteric effector increasing the Vmax of the lyase activity. Its function is as follows. A cytochrome P450 monooxygenase involved in corticoid and androgen biosynthesis. Catalyzes 17-alpha hydroxylation of C21 steroids, which is common for both pathways. A second oxidative step, required only for androgen synthesis, involves an acyl-carbon cleavage. The 17-alpha hydroxy intermediates, as part of adrenal glucocorticoids biosynthesis pathway, are precursors of cortisol. Hydroxylates steroid hormones, pregnenolone and progesterone to form 17-alpha hydroxy metabolites, followed by the cleavage of the C17-C20 bond to form C19 steroids, dehydroepiandrosterone (DHEA) and androstenedione. Has 16-alpha hydroxylase activity. Catalyzes 16-alpha hydroxylation of 17-alpha hydroxy pregnenolone, followed by the cleavage of the C17-C20 bond to form 16-alpha-hydroxy DHEA. Also 16-alpha hydroxylates androgens, relevant for estriol synthesis. Mechanistically, uses molecular oxygen inserting one oxygen atom into a substrate, and reducing the second into a water molecule, with two electrons provided by NADPH via cytochrome P450 reductase (CPR; NADPH-ferrihemoprotein reductase). In Cavia porcellus (Guinea pig), this protein is Steroid 17-alpha-hydroxylase/17,20 lyase (CYP17A1).